A 280-amino-acid polypeptide reads, in one-letter code: Fructose-1,6-bisphosphatase class 1 (280 aa).

Glutamate 64, aspartate 83, leucine 85, and aspartate 86 together coordinate Mg(2+). Substrate contacts are provided by residues 86 to 89, tyrosine 189, and lysine 220; that span reads DGSS. Position 226 (glutamate 226) interacts with Mg(2+).

Belongs to the FBPase class 1 family. As to quaternary structure, homotetramer. The cofactor is Mg(2+).

It is found in the cytoplasm. It catalyses the reaction beta-D-fructose 1,6-bisphosphate + H2O = beta-D-fructose 6-phosphate + phosphate. The protein operates within carbohydrate biosynthesis; gluconeogenesis. The chain is Fructose-1,6-bisphosphatase class 1 from Campylobacter jejuni subsp. jejuni serotype O:23/36 (strain 81-176).